The following is a 1373-amino-acid chain: DNA-directed RNA polymerase subunit beta'' (1373 aa).

The Zn(2+) site is built by C220, C291, C298, and C301.

The protein belongs to the RNA polymerase beta' chain family. RpoC2 subfamily. In terms of assembly, in plastids the minimal PEP RNA polymerase catalytic core is composed of four subunits: alpha, beta, beta', and beta''. When a (nuclear-encoded) sigma factor is associated with the core the holoenzyme is formed, which can initiate transcription. It depends on Zn(2+) as a cofactor.

It localises to the plastid. The protein localises to the chloroplast. It catalyses the reaction RNA(n) + a ribonucleoside 5'-triphosphate = RNA(n+1) + diphosphate. DNA-dependent RNA polymerase catalyzes the transcription of DNA into RNA using the four ribonucleoside triphosphates as substrates. The chain is DNA-directed RNA polymerase subunit beta'' from Silene latifolia (White campion).